Consider the following 314-residue polypeptide: Secreted frizzled-related protein 5 (314 aa).

Positions 1-21 are cleaved as a signal peptide; the sequence is MWVAWSARTAALALLLGALHG. Positions 45–162 constitute an FZ domain; it reads SKPPQCLDIP…PLDNDLCIAV (118 aa). 8 cysteine pairs are disulfide-bonded: Cys50/Cys113, Cys60/Cys106, Cys97/Cys132, Cys121/Cys159, Cys125/Cys149, Cys178/Cys250, Cys181/Cys252, and Cys195/Cys300. Residues 178–300 enclose the NTR domain; that stretch reads CAQCEMEHSA…AVKFMFSYPC (123 aa).

This sequence belongs to the secreted frizzled-related protein (sFRP) family.

Its subcellular location is the secreted. In terms of biological role, soluble frizzled-related proteins (sFRPS) function as modulators of Wnt signaling through direct interaction with Wnts. They have a role in regulating cell growth and differentiation in specific cell types. SFRP5 may be involved in determining the polarity of photoreceptor, and perhaps, other cells in the retina. In Mus musculus (Mouse), this protein is Secreted frizzled-related protein 5 (Sfrp5).